The following is a 599-amino-acid chain: Nucleosomal histone kinase 1 (599 aa).

The region spanning 47–328 is the Protein kinase domain; it reads WRIGPSIGVG…PDYDKCRSWF (282 aa). ATP contacts are provided by residues 53-61 and lysine 77; that span reads IGVGGFGEI. Aspartate 183 serves as the catalytic Proton acceptor. 2 disordered regions span residues 340–507 and 532–599; these read NGDL…PQPR and RKKK…KYQG. Polar residues predominate over residues 349-361; it reads PQTSSNNNLSPPG. Residues serine 376, serine 381, serine 382, serine 388, and serine 390 each carry the phosphoserine modification. Over residues 435–448 the composition is skewed to basic and acidic residues; the sequence is VKTEPKSTPRERAT. The residue at position 483 (serine 483) is a Phosphoserine. Residues 546 to 558 are compositionally biased toward low complexity; the sequence is SRTPSSRSALASS. 2 positions are modified to phosphoserine: serine 564 and serine 586. The residue at position 589 (threonine 589) is a Phosphothreonine.

The protein belongs to the protein kinase superfamily. CK1 Ser/Thr protein kinase family. VRK subfamily. In terms of assembly, may interact with Unc-89 (via protein kinase domain 1). Interacts with L(2)gl. Mg(2+) serves as cofactor. Post-translationally, phosphorylated during mitosis and female meiosis. In terms of tissue distribution, expressed in ovaries (at protein level). Expressed in indirect flight muscle (IFM) (at protein level).

Its subcellular location is the cytoplasm. The protein resides in the nucleus. It localises to the chromosome. The protein localises to the myofibril. It is found in the sarcomere. Its subcellular location is the z line. The protein resides in the m line. The catalysed reaction is L-seryl-[protein] + ATP = O-phospho-L-seryl-[protein] + ADP + H(+). It carries out the reaction L-threonyl-[protein] + ATP = O-phospho-L-threonyl-[protein] + ADP + H(+). Functionally, serine/threonine-protein kinase involved in somatic mitosis and female meiosis. Required for spindle organization in mitosis, and for the establishment or maintenance of meiosis-specific chromosomal configurations, including the prophase I karyosome and the metaphase I spindle. Specifically phosphorylates nucleosomal H2A on 'Thr-119'. Required for the development and organization of indirect flight muscle sarcomeres by regulating the formation of M line and H zone and the correct assembly of thick and thin filaments in the sarcomere. The chain is Nucleosomal histone kinase 1 (ball) from Drosophila melanogaster (Fruit fly).